A 399-amino-acid chain; its full sequence is S-adenosylmethionine synthase (399 aa).

ATP is bound at residue histidine 15. Aspartate 17 is a Mg(2+) binding site. Glutamate 43 contacts K(+). The L-methionine site is built by glutamate 56 and glutamine 99. The interval 99 to 109 (QSPDIAGGVDH) is flexible loop. Residues 175 to 177 (DAK), 242 to 243 (RF), aspartate 251, 257 to 258 (RK), alanine 274, and lysine 278 contribute to the ATP site. Aspartate 251 contacts L-methionine. L-methionine is bound at residue lysine 282.

The protein belongs to the AdoMet synthase family. In terms of assembly, homotetramer; dimer of dimers. Requires Mg(2+) as cofactor. The cofactor is K(+).

The protein localises to the cytoplasm. The catalysed reaction is L-methionine + ATP + H2O = S-adenosyl-L-methionine + phosphate + diphosphate. It functions in the pathway amino-acid biosynthesis; S-adenosyl-L-methionine biosynthesis; S-adenosyl-L-methionine from L-methionine: step 1/1. Its function is as follows. Catalyzes the formation of S-adenosylmethionine (AdoMet) from methionine and ATP. The overall synthetic reaction is composed of two sequential steps, AdoMet formation and the subsequent tripolyphosphate hydrolysis which occurs prior to release of AdoMet from the enzyme. The polypeptide is S-adenosylmethionine synthase (Lactobacillus helveticus (strain DPC 4571)).